The following is a 149-amino-acid chain: Transcription antitermination protein NusB (149 aa).

It belongs to the NusB family.

Its function is as follows. Involved in transcription antitermination. Required for transcription of ribosomal RNA (rRNA) genes. Binds specifically to the boxA antiterminator sequence of the ribosomal RNA (rrn) operons. The polypeptide is Transcription antitermination protein NusB (Acinetobacter baumannii (strain SDF)).